The following is a 156-amino-acid chain: Radiation-inducible immediate-early gene IEX-1 (156 aa).

Residues 1–62 form a disordered region; it reads MCHSRSCHPT…SASRGHRKRS (62 aa). The Cytoplasmic portion of the chain corresponds to 1–82; that stretch reads MCHSRSCHPT…RQLPVEEPNP (82 aa). Thr18 carries the post-translational modification Phosphothreonine; by MAPK1. A Phosphoserine modification is found at Ser31. Over residues 44-55 the composition is skewed to low complexity; sequence PAAAPAGRPSAS. Residues 83 to 99 form a helical; Signal-anchor for type II membrane protein membrane-spanning segment; the sequence is AKRLLFLLLTIVFCQIL. The Extracellular segment spans residues 100–156; it reads MAEEGVPAPLPPEDAPNAASLAPTPVSAVLEPFNLTSEPSDYALDLSTFLQQHPAAF. At Thr123 the chain carries Phosphothreonine; by MAPK1. Ser126 carries the phosphoserine; by MAPK1 modification. Asn133 is a glycosylation site (N-linked (GlcNAc...) asparagine).

Belongs to the IER3 family. Interacts with the PPP2R5C-PP2A holoenzyme and ERK kinases; regulates ERK dephosphorylation. Phosphorylated at Thr-18, Thr-123 and Ser-126 by MAPK1/ERK2 and probably MAPK3/ERK1. Upon phosphorylation by MAPK1/ERK2 and MAPK3/ERK1, acquires the ability to inhibit cell death induced by various stimuli. In terms of processing, glycosylated.

It is found in the membrane. Functionally, may play a role in the ERK signaling pathway by inhibiting the dephosphorylation of ERK by phosphatase PP2A-PPP2R5C holoenzyme. Also acts as an ERK downstream effector mediating survival. As a member of the NUPR1/RELB/IER3 survival pathway, may provide pancreatic ductal adenocarcinoma with remarkable resistance to cell stress, such as starvation or gemcitabine treatment. This Homo sapiens (Human) protein is Radiation-inducible immediate-early gene IEX-1 (IER3).